The chain runs to 434 residues: Trigger factor (434 aa).

A PPIase FKBP-type domain is found at 160 to 245 (GDKVKMNFVG…LTEVQAAQLP (86 aa)).

It belongs to the FKBP-type PPIase family. Tig subfamily.

Its subcellular location is the cytoplasm. It carries out the reaction [protein]-peptidylproline (omega=180) = [protein]-peptidylproline (omega=0). In terms of biological role, involved in protein export. Acts as a chaperone by maintaining the newly synthesized protein in an open conformation. Functions as a peptidyl-prolyl cis-trans isomerase. The sequence is that of Trigger factor from Shewanella denitrificans (strain OS217 / ATCC BAA-1090 / DSM 15013).